We begin with the raw amino-acid sequence, 574 residues long: Septation ring formation regulator EzrA (574 aa).

At Met1–Leu7 the chain is on the extracellular side. A helical membrane pass occupies residues Leu8 to Ile26. The Cytoplasmic segment spans residues Arg27–Phe574. Coiled-coil stretches lie at residues Asn102–Asn141, Lys255–Leu368, and Leu409–Ala495.

Belongs to the EzrA family.

Its subcellular location is the cell membrane. Its function is as follows. Negative regulator of FtsZ ring formation; modulates the frequency and position of FtsZ ring formation. Inhibits FtsZ ring formation at polar sites. Interacts either with FtsZ or with one of its binding partners to promote depolymerization. This Streptococcus mutans serotype c (strain ATCC 700610 / UA159) protein is Septation ring formation regulator EzrA.